A 232-amino-acid polypeptide reads, in one-letter code: Small ribosomal subunit protein uS3 (232 aa).

The 69-residue stretch at 39-107 (VRQYLTKELK…PAQINIAEVR (69 aa)) folds into the KH type-2 domain.

This sequence belongs to the universal ribosomal protein uS3 family. As to quaternary structure, part of the 30S ribosomal subunit. Forms a tight complex with proteins S10 and S14.

Binds the lower part of the 30S subunit head. Binds mRNA in the 70S ribosome, positioning it for translation. This is Small ribosomal subunit protein uS3 from Aliivibrio fischeri (strain MJ11) (Vibrio fischeri).